The chain runs to 450 residues: Serine/threonine-protein kinase-transforming protein Rmil (450 aa).

Basic and acidic residues-rich tracts occupy residues 1-14 (MEAV…DQGV) and 49-73 (QRER…RDSS). Residues 1 to 80 (MEAVIKDLIR…DSSDDWEIPD (80 aa)) are disordered. Residues 83-343 (ITVGQRIGSG…PQILASIELL (261 aa)) enclose the Protein kinase domain. ATP-binding positions include 89 to 97 (IGSGSFGTV) and lysine 109. The active-site Proton acceptor is the aspartate 202.

Belongs to the protein kinase superfamily. TKL Ser/Thr protein kinase family. RAF subfamily.

The catalysed reaction is L-seryl-[protein] + ATP = O-phospho-L-seryl-[protein] + ADP + H(+). It catalyses the reaction L-threonyl-[protein] + ATP = O-phospho-L-threonyl-[protein] + ADP + H(+). The chain is Serine/threonine-protein kinase-transforming protein Rmil (V-RMIL) from Avian rous-associated virus type 1.